A 65-amino-acid chain; its full sequence is Pancreatic polypeptide prohormone (65 aa).

At tyrosine 36 the chain carries Tyrosine amide. Positions 59 to 65 (ELSPMGA) are excised as a propeptide.

The protein belongs to the NPY family.

It is found in the secreted. Functionally, hormone secreted by pancreatic cells that acts as a regulator of pancreatic and gastrointestinal functions probably by signaling through the G protein-coupled receptor NPY4R2. The polypeptide is Pancreatic polypeptide prohormone (PPY) (Sus scrofa (Pig)).